Consider the following 505-residue polypeptide: Trans-cinnamate 4-monooxygenase (505 aa).

The helical transmembrane segment at 3-23 threads the bilayer; sequence LLLLEKTLLGSFVAVLVAILV. Residues 213-218 and Ala306 contribute to the (E)-cinnamate site; that span reads RSRLAQ. Residue Cys447 participates in heme binding.

The protein belongs to the cytochrome P450 family. Requires heme as cofactor.

Its subcellular location is the membrane. The enzyme catalyses (E)-cinnamate + reduced [NADPH--hemoprotein reductase] + O2 = (E)-4-coumarate + oxidized [NADPH--hemoprotein reductase] + H2O + H(+). Its pathway is phenylpropanoid metabolism; trans-4-coumarate biosynthesis; trans-4-coumarate from trans-cinnamate: step 1/1. Catalyzes the first oxidative step of the phenylpropanoid pathway in higher plants by transforming trans-cinnamate into p-coumarate. The compounds formed by this pathway are essential components for lignification, pollination, and defense against ultraviolet light, predators and pathogens. The protein is Trans-cinnamate 4-monooxygenase (CYP73A16) of Populus kitakamiensis (Aspen).